We begin with the raw amino-acid sequence, 186 residues long: ATP synthase subunit delta (186 aa).

Belongs to the ATPase delta chain family. In terms of assembly, F-type ATPases have 2 components, F(1) - the catalytic core - and F(0) - the membrane proton channel. F(1) has five subunits: alpha(3), beta(3), gamma(1), delta(1), epsilon(1). F(0) has three main subunits: a(1), b(2) and c(10-14). The alpha and beta chains form an alternating ring which encloses part of the gamma chain. F(1) is attached to F(0) by a central stalk formed by the gamma and epsilon chains, while a peripheral stalk is formed by the delta and b chains.

Its subcellular location is the cell inner membrane. F(1)F(0) ATP synthase produces ATP from ADP in the presence of a proton or sodium gradient. F-type ATPases consist of two structural domains, F(1) containing the extramembraneous catalytic core and F(0) containing the membrane proton channel, linked together by a central stalk and a peripheral stalk. During catalysis, ATP synthesis in the catalytic domain of F(1) is coupled via a rotary mechanism of the central stalk subunits to proton translocation. Functionally, this protein is part of the stalk that links CF(0) to CF(1). It either transmits conformational changes from CF(0) to CF(1) or is implicated in proton conduction. The sequence is that of ATP synthase subunit delta from Ruegeria pomeroyi (strain ATCC 700808 / DSM 15171 / DSS-3) (Silicibacter pomeroyi).